The primary structure comprises 964 residues: Chaperone protein ClpB4, mitochondrial (964 aa).

The N-terminal 39 residues, 1 to 39 (MALRRLSKSVSSAIKAQYTLSRPSPLLRSRSLSSSPHYT), are a transit peptide targeting the mitochondrion. The Clp R domain maps to 83–227 (VNQNEFTEMA…KDAIKDVRGD (145 aa)). 2 repeat regions span residues 88–153 (FTEM…ISKQ) and 164–227 (LGSS…VRGD). The interval 242–490 (LEKYGNDLTE…KLKMEITSKP (249 aa)) is i. ATP-binding positions include 287–294 (GEPGVGKT) and 690–697 (GPTGVGKT). Residues 616-807 (VTDLDIAEIV…VVIMTSNIGS (192 aa)) form an II region.

It belongs to the ClpA/ClpB family.

It is found in the mitochondrion. Functionally, molecular chaperone that does not seem to be involved in heat stress response or tolerance. The chain is Chaperone protein ClpB4, mitochondrial (CLPB4) from Arabidopsis thaliana (Mouse-ear cress).